The primary structure comprises 156 residues: Small ribosomal subunit protein uS7c (156 aa).

Belongs to the universal ribosomal protein uS7 family. As to quaternary structure, part of the 30S ribosomal subunit.

Its subcellular location is the plastid. The protein localises to the chloroplast. One of the primary rRNA binding proteins, it binds directly to 16S rRNA where it nucleates assembly of the head domain of the 30S subunit. This Chlorella vulgaris (Green alga) protein is Small ribosomal subunit protein uS7c (rps7).